Reading from the N-terminus, the 330-residue chain is MKTSIRYALLAAALTAATPALADITVYNGQHKEAAQAVADAFTRATGIKVKLNSAKGDQLAGQIKEEGSRSPADVFYSEQIPALATLSAANLLEPLPASTINETRGKGVPVAAKKDWVALSGRSRVVVYDTRKLSEKDLEKSVLNYATPKWKNRIGYVPTSGAFLEQIVAIVKLKGEAAALKWLKGLKEYGKPYAKNSVALQAVENGEIDAALINNYYWHAFAREKGVQNVHTRLNFVRHRDPGALVTYSGAVLKSSQNKDEAKKFVAFLAGKEGQRALTAVRAEYPLNPHVVSTFNLEPIAKLEAPQVSATTVSEKEHATRLLEQAGMK.

The first 22 residues, M1 to A22, serve as a signal peptide directing secretion. The Fe cation site is built by H31, E79, Y217, and Y218.

The protein belongs to the bacterial solute-binding protein 1 family.

The protein resides in the periplasm. Its function is as follows. This protein may be a central component in the iron-acquisition system. The polypeptide is Major ferric iron-binding protein (fbp) (Neisseria gonorrhoeae).